The chain runs to 227 residues: uncharacterized protein (227 aa).

This is an uncharacterized protein from Haemophilus influenzae (Bacteriophage HP1).